The following is a 902-amino-acid chain: U3 small nucleolar RNA-associated protein 21 homolog (902 aa).

WD repeat units follow at residues 40 to 71 (DIEA…LLFV), 80 to 110 (TCLK…WDID), 119 to 154 (THLD…LHTT), 164 to 198 (TSLL…RVHE), 206 to 243 (GITS…MEFK), 249 to 284 (LSCS…QNVT), 289 to 332 (FGSL…RSRN), 339 to 373 (SFVK…QSTE), 399 to 438 (TALS…GQHV), 447 to 481 (VRSV…KRKS), 492 to 528 (VTAV…DSLD), 533 to 568 (ITHA…VREL), 570 to 611 (GHSN…DSIS), and 613 to 651 (PSVC…KHVS).

Interacts with snoRNA U3. Interacts with MPP10. Component of the ribosomal small subunit (SSU) processome composed of at least 40 protein subunits and snoRNA U3.

Its subcellular location is the nucleus. It localises to the nucleolus. Functionally, involved in nucleolar processing of pre-18S ribosomal RNA and ribosome assembly. The protein is U3 small nucleolar RNA-associated protein 21 homolog of Schizosaccharomyces pombe (strain 972 / ATCC 24843) (Fission yeast).